Reading from the N-terminus, the 563-residue chain is Pyruvate decarboxylase (563 aa).

Pyruvate contacts are provided by D28 and H115. Thiamine diphosphate-binding positions include T390 and 413-415 (GSI). D444 contacts Mg(2+). Thiamine diphosphate is bound by residues 445-446 (GS) and 471-476 (NDGYTI). Mg(2+)-binding residues include N471 and G473. E477 provides a ligand contact to pyruvate.

Belongs to the TPP enzyme family. Homotetramer. It depends on Mg(2+) as a cofactor. Thiamine diphosphate is required as a cofactor.

The enzyme catalyses a 2-oxocarboxylate + H(+) = an aldehyde + CO2. It catalyses the reaction pyruvate + H(+) = acetaldehyde + CO2. This chain is Pyruvate decarboxylase (PDC1), found in Kluyveromyces lactis (strain ATCC 8585 / CBS 2359 / DSM 70799 / NBRC 1267 / NRRL Y-1140 / WM37) (Yeast).